We begin with the raw amino-acid sequence, 670 residues long: DEAD-box ATP-dependent RNA helicase 16 (670 aa).

The segment covering 1–10 (MAAAAAASSM) has biased composition (low complexity). The segment at 1–97 (MAAAAAASSM…EEREVSFDEL (97 aa)) is disordered. Composition is skewed to basic and acidic residues over residues 18–30 (AATEQEVENHDEA) and 40–49 (NDGHTAHAAE). Residues 92-120 (VSFDELGLDEQLKRALRKKGLDKATPIQR) carry the Q motif motif. The Helicase ATP-binding domain maps to 123–306 (IPLILEGKDV…KLLLHNPFIL (184 aa)). An ATP-binding site is contributed by 136–143 (AKTGSGKT). A DEAD box motif is present at residues 254 to 257 (DEAD). Residues 340–523 (LVLLKLELIQ…PFPLLTKNAV (184 aa)) enclose the Helicase C-terminal domain. Residues 616 to 670 (DIDKPRRRKRMGFKGGSGRSSDPLKTFSAEGKSRRRGRKERDGEQDRRKRKKVES) form a disordered region. Basic and acidic residues predominate over residues 654–670 (KERDGEQDRRKRKKVES).

The protein belongs to the DEAD box helicase family. DDX56/DBP9 subfamily.

It carries out the reaction ATP + H2O = ADP + phosphate + H(+). The sequence is that of DEAD-box ATP-dependent RNA helicase 16 from Oryza sativa subsp. japonica (Rice).